The sequence spans 274 residues: Large ribosomal subunit protein uL2 (274 aa).

Disordered regions lie at residues 28–59 (APYA…GGHK) and 222–274 (GAAM…RRTK). Polar residues predominate over residues 39–49 (KSGGRNNNGRI). Residues 229 to 239 (DHPHGGGEGRS) are compositionally biased toward basic and acidic residues.

It belongs to the universal ribosomal protein uL2 family. In terms of assembly, part of the 50S ribosomal subunit. Forms a bridge to the 30S subunit in the 70S ribosome.

Functionally, one of the primary rRNA binding proteins. Required for association of the 30S and 50S subunits to form the 70S ribosome, for tRNA binding and peptide bond formation. It has been suggested to have peptidyltransferase activity; this is somewhat controversial. Makes several contacts with the 16S rRNA in the 70S ribosome. The chain is Large ribosomal subunit protein uL2 from Marinomonas sp. (strain MWYL1).